The primary structure comprises 145 residues: Class I hydrophobin 1 (145 aa).

A signal peptide spans 1-19 (MKFSYAIAAVVAAAASVQA). 4 cysteine pairs are disulfide-bonded: Cys-65–Cys-126, Cys-72–Cys-120, Cys-73–Cys-106, and Cys-127–Cys-140. Asn-80 and Asn-129 each carry an N-linked (GlcNAc...) asparagine glycan.

It belongs to the fungal hydrophobin family. In terms of assembly, self-assembles to form functional amyloid fibrils called rodlets. Self-assembly into fibrillar rodlets occurs spontaneously at hydrophobic:hydrophilic interfaces and the rodlets further associate laterally to form amphipathic monolayers.

It is found in the secreted. It localises to the cell wall. Its function is as follows. Aerial growth, conidiation, and dispersal of filamentous fungi in the environment rely upon a capability of their secreting small amphipathic proteins called hydrophobins (HPBs) with low sequence identity. Class I can self-assemble into an outermost layer of rodlet bundles on aerial cell surfaces, conferring cellular hydrophobicity that supports fungal growth, development and dispersal; whereas Class II form highly ordered films at water-air interfaces through intermolecular interactions but contribute nothing to the rodlet structure. Hyd1 is a class I hydrophobin that is crucial for the initiation of primordia formation. Plays also important roles in nitrogen regulation and resistance to abiotic stresses. The chain is Class I hydrophobin 1 from Ganoderma lucidum (Ling zhi medicinal fungus).